Reading from the N-terminus, the 338-residue chain is Lipoate-protein ligase A (338 aa).

The 188-residue stretch at 29-216 (PATQRVLFLW…AFFAHYGERV (188 aa)) folds into the BPL/LPL catalytic domain. Residues R71, 76–79 (GAVF), and K134 each bind ATP. Residue K134 participates in (R)-lipoate binding.

It belongs to the LplA family. In terms of assembly, monomer.

It localises to the cytoplasm. It catalyses the reaction L-lysyl-[lipoyl-carrier protein] + (R)-lipoate + ATP = N(6)-[(R)-lipoyl]-L-lysyl-[lipoyl-carrier protein] + AMP + diphosphate + H(+). It participates in protein modification; protein lipoylation via exogenous pathway; protein N(6)-(lipoyl)lysine from lipoate: step 1/2. The protein operates within protein modification; protein lipoylation via exogenous pathway; protein N(6)-(lipoyl)lysine from lipoate: step 2/2. In terms of biological role, catalyzes both the ATP-dependent activation of exogenously supplied lipoate to lipoyl-AMP and the transfer of the activated lipoyl onto the lipoyl domains of lipoate-dependent enzymes. The polypeptide is Lipoate-protein ligase A (Escherichia coli O9:H4 (strain HS)).